Reading from the N-terminus, the 111-residue chain is MISTVALFWALCVVCIVNMARYFSSLRALLVVLRGCDPLLYQYVDGGGFFTSHGQPSKQMRLVWYIYAQRYRDHHDDEFIRRCERLRCQFILTSALCGLVVVSMVALLIWH.

2 helical membrane-spanning segments follow: residues 1–21 (MIST…NMAR) and 90–110 (FILT…LLIW).

The protein belongs to the universal stress protein B family.

The protein localises to the cell inner membrane. This is Universal stress protein B from Enterobacter sp. (strain 638).